A 134-amino-acid polypeptide reads, in one-letter code: Protein PsiE homolog (134 aa).

The next 4 membrane-spanning stretches (helical) occupy residues 14-34 (LQWI…IFLI), 56-76 (VESI…IKYF), 82-102 (FPLR…IIVS), and 106-126 (PMET…LYIS).

It belongs to the PsiE family.

Its subcellular location is the cell membrane. In Bacillus anthracis, this protein is Protein PsiE homolog.